A 99-amino-acid chain; its full sequence is Small ribosomal subunit protein uS14m (99 aa).

It belongs to the universal ribosomal protein uS14 family.

The protein resides in the mitochondrion. This is Small ribosomal subunit protein uS14m (RPS14) from Prototheca wickerhamii.